Reading from the N-terminus, the 483-residue chain is uncharacterized protein (483 aa).

In terms of domain architecture, TRAM spans 11-71; the sequence is RYRKGDIIEL…SRYLEARAIE (61 aa). [4Fe-4S] cluster is bound by residues Cys84, Cys90, Cys93, and Cys187. S-adenosyl-L-methionine-binding residues include Gln312, Tyr341, Glu362, and Asp412. The active-site Nucleophile is Cys439.

This sequence belongs to the class I-like SAM-binding methyltransferase superfamily. RNA M5U methyltransferase family.

This is an uncharacterized protein from Chlorobaculum tepidum (strain ATCC 49652 / DSM 12025 / NBRC 103806 / TLS) (Chlorobium tepidum).